The primary structure comprises 420 residues: MPKLPRGLRFGADNEILNDFQELWFPDLFIESSDTHPWYTLKGRVLNAHLDDRLPNVGGRQVRRTPHRVTVPIASSGLRPVTTVQYDPAALSFLLNARVDWDFGNGDSANLVINDFLFRTFAPKEFDFSNSLVPRYTQAFSAFNAKYGTMIGEGLETIKYLGLLLRRLREGYRAVKRGDLRALRRVIQSYHNGKWKPATAGNLWLEFRYGLMPLFYDIRDVMLDWQNRHDKIQRLLRFSVGHGEDYVVEFDNLYPAVAYFKLKGEITLERRHRHGISYANREGYAVFDNGSLRPVSDWKELATAFINPHEVAWELTPYSFVVDWFLNVGDILAQQGQLYHNIDIVDGFDRRDIRLKSFTIKGERNGRPVNVSASLSAVDLFYSRLHTSNLPFATLDLDTTFSSFKHVLDSIFLLTQRVKR.

RNA-binding stretches follow at residues I158–K176, Q226–L236, and P294–W298.

The protein belongs to the Leviviricetes maturation protein family. As to quaternary structure, interacts with host MurA; this interaction inhibits the first step in host cell wall synthesis. Interacts with the capsid protein.

It localises to the virion. Induces host cell lysis. Inhibits host MurA activity thereby blocking the synthesis of murein precursors necessary for the host cell wall biosynthesis. May be responsible for the attachment to the host pilus. Makes extensive contacts with the viral genome. The polypeptide is Maturation protein A2 (Escherichia virus Qbeta (Bacteriophage Q-beta)).